A 68-amino-acid chain; its full sequence is ATP synthase F(0) complex subunit 8 (68 aa).

The chain crosses the membrane as a helical span at residues 8-24 (TWLITILSMILTLLIVF). Lysine 54 bears the N6-acetyllysine; alternate mark. Lysine 54 is subject to N6-succinyllysine; alternate. Position 57 is an N6-acetyllysine (lysine 57).

The protein belongs to the ATPase protein 8 family. In terms of assembly, component of the ATP synthase complex composed at least of ATP5F1A/subunit alpha, ATP5F1B/subunit beta, ATP5MC1/subunit c (homooctomer), MT-ATP6/subunit a, MT-ATP8/subunit 8, ATP5ME/subunit e, ATP5MF/subunit f, ATP5MG/subunit g, ATP5MK/subunit k, ATP5MJ/subunit j, ATP5F1C/subunit gamma, ATP5F1D/subunit delta, ATP5F1E/subunit epsilon, ATP5PF/subunit F6, ATP5PB/subunit b, ATP5PD/subunit d, ATP5PO/subunit OSCP. ATP synthase complex consists of a soluble F(1) head domain (subunits alpha(3) and beta(3)) - the catalytic core - and a membrane F(0) domain - the membrane proton channel (subunits c, a, 8, e, f, g, k and j). These two domains are linked by a central stalk (subunits gamma, delta, and epsilon) rotating inside the F1 region and a stationary peripheral stalk (subunits F6, b, d, and OSCP). Interacts with PRICKLE3.

It localises to the mitochondrion membrane. Its function is as follows. Subunit 8, of the mitochondrial membrane ATP synthase complex (F(1)F(0) ATP synthase or Complex V) that produces ATP from ADP in the presence of a proton gradient across the membrane which is generated by electron transport complexes of the respiratory chain. ATP synthase complex consist of a soluble F(1) head domain - the catalytic core - and a membrane F(1) domain - the membrane proton channel. These two domains are linked by a central stalk rotating inside the F(1) region and a stationary peripheral stalk. During catalysis, ATP synthesis in the catalytic domain of F(1) is coupled via a rotary mechanism of the central stalk subunits to proton translocation. In vivo, can only synthesize ATP although its ATP hydrolase activity can be activated artificially in vitro. Part of the complex F(0) domain. The protein is ATP synthase F(0) complex subunit 8 of Lemur catta (Ring-tailed lemur).